A 389-amino-acid chain; its full sequence is Odorant receptor 85c (389 aa).

Topologically, residues 1-33 (MKFMKYAVFFYTSVGIEPYTIDSRSKKASLWSH) are cytoplasmic. The helical transmembrane segment at 34-54 (LLFWANVINLSVIVFGEILYL) threads the bilayer. The Extracellular portion of the chain corresponds to 55–66 (GVAYSDGKFIDA). The helical transmembrane segment at 67-87 (VTVLSYIGFVIVGMSKMFFIW) threads the bilayer. Residues 88-130 (WKKTDLSDLVKELEHIYPNGKAEEEMYRLDRYLRSCSRISITY) lie on the Cytoplasmic side of the membrane. The chain crosses the membrane as a helical span at residues 131–151 (ALLYSVLIWTFNLFSIMQFLV). Residues 152-199 (YEKLLKIRVVGQTLPYLMYFPWNWHENWTYYVLLFCQNFAGHTSASGQ) are Extracellular-facing. Asn178 carries N-linked (GlcNAc...) asparagine glycosylation. A helical membrane pass occupies residues 200–220 (ISTDLLLCAVATQVVMHFDYL). Residues 221 to 259 (ARVVEKQVLDRDWSENSRFLAKTVQYHQRILRLMDVLND) lie on the Cytoplasmic side of the membrane. The helical transmembrane segment at 260-280 (IFGIPLLLNFMVSTFVICFVG) threads the bilayer. The Extracellular segment spans residues 281-290 (FQMTVGVPPD). Residues 291-311 (IMIKLFLFLFSSLSQVYLICH) form a helical membrane-spanning segment. Over 312 to 359 (YGQLIADASSSLSISAYKQNWQNADIRYRRALVFFIARPQRTTYLKAT) the chain is Cytoplasmic. Residues 360-380 (IFMNITRATMTDLLQVSYKFF) traverse the membrane as a helical segment. The Extracellular portion of the chain corresponds to 381–389 (ALLRTMYIK).

It belongs to the insect chemoreceptor superfamily. Heteromeric odorant receptor channel (TC 1.A.69) family. Or49a subfamily. In terms of assembly, interacts with Orco. Complexes exist early in the endomembrane system in olfactory sensory neurons (OSNs), coupling these complexes to the conserved ciliary trafficking pathway.

It localises to the cell membrane. In terms of biological role, odorant receptor which mediates acceptance or avoidance behavior, depending on its substrates. The odorant receptor repertoire encodes a large collection of odor stimuli that vary widely in identity, intensity, and duration. May form a complex with Orco to form odorant-sensing units, providing sensitive and prolonged odorant signaling and calcium permeability. The protein is Odorant receptor 85c (Or85c) of Drosophila melanogaster (Fruit fly).